Here is a 556-residue protein sequence, read N- to C-terminus: Formate--tetrahydrofolate ligase (556 aa).

65 to 72 (TAAGEGKS) is an ATP binding site.

It belongs to the formate--tetrahydrofolate ligase family.

The enzyme catalyses (6S)-5,6,7,8-tetrahydrofolate + formate + ATP = (6R)-10-formyltetrahydrofolate + ADP + phosphate. It functions in the pathway one-carbon metabolism; tetrahydrofolate interconversion. The protein is Formate--tetrahydrofolate ligase of Elusimicrobium minutum (strain Pei191).